The following is a 354-amino-acid chain: uncharacterized protein (354 aa).

It belongs to the band 7/mec-2 family.

The protein localises to the mitochondrion. This is an uncharacterized protein from Schizosaccharomyces pombe (strain 972 / ATCC 24843) (Fission yeast).